A 158-amino-acid chain; its full sequence is NAD(P)H-quinone oxidoreductase subunit N (158 aa).

Belongs to the complex I NdhN subunit family. In terms of assembly, NDH-1 can be composed of about 15 different subunits; different subcomplexes with different compositions have been identified which probably have different functions.

The protein localises to the cellular thylakoid membrane. It carries out the reaction a plastoquinone + NADH + (n+1) H(+)(in) = a plastoquinol + NAD(+) + n H(+)(out). The catalysed reaction is a plastoquinone + NADPH + (n+1) H(+)(in) = a plastoquinol + NADP(+) + n H(+)(out). NDH-1 shuttles electrons from an unknown electron donor, via FMN and iron-sulfur (Fe-S) centers, to quinones in the respiratory and/or the photosynthetic chain. The immediate electron acceptor for the enzyme in this species is believed to be plastoquinone. Couples the redox reaction to proton translocation, and thus conserves the redox energy in a proton gradient. Cyanobacterial NDH-1 also plays a role in inorganic carbon-concentration. The polypeptide is NAD(P)H-quinone oxidoreductase subunit N (Gloeothece citriformis (strain PCC 7424) (Cyanothece sp. (strain PCC 7424))).